Here is a 542-residue protein sequence, read N- to C-terminus: Chaperonin GroEL 2 (542 aa).

ATP contacts are provided by residues 30–33 (TLGP), Lys-51, 87–91 (DGTTT), Gly-415, and Asp-496.

The protein belongs to the chaperonin (HSP60) family. As to quaternary structure, forms a cylinder of 14 subunits composed of two heptameric rings stacked back-to-back. Interacts with the co-chaperonin GroES.

It localises to the cytoplasm. It carries out the reaction ATP + H2O + a folded polypeptide = ADP + phosphate + an unfolded polypeptide.. Functionally, together with its co-chaperonin GroES, plays an essential role in assisting protein folding. The GroEL-GroES system forms a nano-cage that allows encapsulation of the non-native substrate proteins and provides a physical environment optimized to promote and accelerate protein folding. This chain is Chaperonin GroEL 2, found in Mesorhizobium japonicum (strain LMG 29417 / CECT 9101 / MAFF 303099) (Mesorhizobium loti (strain MAFF 303099)).